The following is a 170-amino-acid chain: 3-isopropylmalate dehydratase small subunit 1 (170 aa).

The protein belongs to the LeuD family. LeuD type 2 subfamily. In terms of assembly, heterodimer of LeuC and LeuD.

The catalysed reaction is (2R,3S)-3-isopropylmalate = (2S)-2-isopropylmalate. It participates in amino-acid biosynthesis; L-leucine biosynthesis; L-leucine from 3-methyl-2-oxobutanoate: step 2/4. In terms of biological role, catalyzes the isomerization between 2-isopropylmalate and 3-isopropylmalate, via the formation of 2-isopropylmaleate. This Methanopyrus kandleri (strain AV19 / DSM 6324 / JCM 9639 / NBRC 100938) protein is 3-isopropylmalate dehydratase small subunit 1 (leuD1).